We begin with the raw amino-acid sequence, 364 residues long: Formimidoylglutamase (364 aa).

Mn(2+) is bound by residues H133, D189, H191, D193, D286, and D288.

Belongs to the arginase family. It depends on Mn(2+) as a cofactor.

The enzyme catalyses N-formimidoyl-L-glutamate + H2O = formamide + L-glutamate. Its pathway is amino-acid degradation; L-histidine degradation into L-glutamate; L-glutamate from N-formimidoyl-L-glutamate (hydrolase route): step 1/1. In terms of biological role, catalyzes the conversion of N-formimidoyl-L-glutamate to L-glutamate and formamide. The sequence is that of Formimidoylglutamase from Photobacterium profundum (strain SS9).